We begin with the raw amino-acid sequence, 712 residues long: Eukaryotic translation initiation factor 3 subunit B (712 aa).

M1 is modified (N-acetylmethionine). The region spanning 56 to 143 is the RRM domain; that stretch reads NIIVVDHLPV…HIFAVNMFDD (88 aa).

This sequence belongs to the eIF-3 subunit B family. Component of the eukaryotic translation initiation factor 3 (eIF-3) complex, which is composed of at least 13 different subunits. Binds to the translation initiation factor TIF3H1.

It localises to the cytoplasm. Functionally, RNA-binding component of the eukaryotic translation initiation factor 3 (eIF-3) complex, which is involved in protein synthesis of a specialized repertoire of mRNAs and, together with other initiation factors, stimulates binding of mRNA and methionyl-tRNAi to the 40S ribosome. The eIF-3 complex specifically targets and initiates translation of a subset of mRNAs involved in cell proliferation. The protein is Eukaryotic translation initiation factor 3 subunit B (TIF3B1) of Arabidopsis thaliana (Mouse-ear cress).